The primary structure comprises 478 residues: Protein nucleotidyltransferase YdiU (478 aa).

Residues G84, G86, R87, K107, D119, G120, R170, and R177 each contribute to the ATP site. D246 serves as the catalytic Proton acceptor. Positions 247 and 256 each coordinate Mg(2+). Residue D256 coordinates ATP.

It belongs to the SELO family. Mg(2+) serves as cofactor. Requires Mn(2+) as cofactor.

It catalyses the reaction L-seryl-[protein] + ATP = 3-O-(5'-adenylyl)-L-seryl-[protein] + diphosphate. The catalysed reaction is L-threonyl-[protein] + ATP = 3-O-(5'-adenylyl)-L-threonyl-[protein] + diphosphate. The enzyme catalyses L-tyrosyl-[protein] + ATP = O-(5'-adenylyl)-L-tyrosyl-[protein] + diphosphate. It carries out the reaction L-histidyl-[protein] + UTP = N(tele)-(5'-uridylyl)-L-histidyl-[protein] + diphosphate. It catalyses the reaction L-seryl-[protein] + UTP = O-(5'-uridylyl)-L-seryl-[protein] + diphosphate. The catalysed reaction is L-tyrosyl-[protein] + UTP = O-(5'-uridylyl)-L-tyrosyl-[protein] + diphosphate. Functionally, nucleotidyltransferase involved in the post-translational modification of proteins. It can catalyze the addition of adenosine monophosphate (AMP) or uridine monophosphate (UMP) to a protein, resulting in modifications known as AMPylation and UMPylation. This is Protein nucleotidyltransferase YdiU from Escherichia coli O1:K1 / APEC.